The chain runs to 114 residues: Ig heavy chain V-A2 region BS-1 (114 aa).

The residue at position 1 (Q1) is a Pyrrolidone carboxylic acid. One can recognise an Ig-like domain in the interval 1–107 (QSVKESEGGL…YLGLMDVWGP (107 aa)).

This chain is Ig heavy chain V-A2 region BS-1, found in Oryctolagus cuniculus (Rabbit).